A 148-amino-acid chain; its full sequence is Protein GLUTAMINE DUMPER 3 (148 aa).

The disordered stretch occupies residues 1 to 24 (MEGRQYYPPRENVEGNRTTMGGGP). Over 1 to 34 (MEGRQYYPPRENVEGNRTTMGGGPHSPWHSPVPY) the chain is Extracellular. Residues 35–55 (LFGGLAAMLGLIAFALLILAC) form a helical membrane-spanning segment. The Cytoplasmic segment spans residues 56–148 (SYWRLSGYLD…RSSESNGETH (93 aa)). The short motif at 99–103 (VIMAG) is the VIMAG element. Positions 120–132 (CDDDDDEDDDVEG) are enriched in acidic residues. The disordered stretch occupies residues 120-148 (CDDDDDEDDDVEGSDQVVPRSSESNGETH). The span at 138–148 (PRSSESNGETH) shows a compositional bias: polar residues.

It belongs to the GLUTAMINE DUMPER 1 (TC 9.B.60) family. Expressed in the vascular tissues. Also detected in anthers.

It is found in the membrane. Functionally, probable subunit of an amino acid transporter involved in the regulation of the amino acid metabolism. Stimulates amino acid export by activating nonselective amino acid facilitators. Acts upstream genes involved in the salicylic acid (SA) pathway and in the geminivirus-host interaction. This is Protein GLUTAMINE DUMPER 3 (GDU3) from Arabidopsis thaliana (Mouse-ear cress).